Reading from the N-terminus, the 267-residue chain is Phosphonates import ATP-binding protein PhnC 1 (267 aa).

The 245-residue stretch at 3–247 folds into the ABC transporter domain; it reads LSLDGVDLVH…ALDALYANEQ (245 aa). ATP is bound at residue 36 to 43; the sequence is GPSGAGKT.

The protein belongs to the ABC transporter superfamily. Phosphonates importer (TC 3.A.1.9.1) family. As to quaternary structure, the complex is composed of two ATP-binding proteins (PhnC), two transmembrane proteins (PhnE) and a solute-binding protein (PhnD).

Its subcellular location is the cell inner membrane. It catalyses the reaction phosphonate(out) + ATP + H2O = phosphonate(in) + ADP + phosphate + H(+). In terms of biological role, part of the ABC transporter complex PhnCDE involved in phosphonates import. Responsible for energy coupling to the transport system. The chain is Phosphonates import ATP-binding protein PhnC 1 from Pseudomonas aeruginosa (strain ATCC 15692 / DSM 22644 / CIP 104116 / JCM 14847 / LMG 12228 / 1C / PRS 101 / PAO1).